Reading from the N-terminus, the 480-residue chain is tRNA-2-methylthio-N(6)-dimethylallyladenosine synthase (480 aa).

An MTTase N-terminal domain is found at 31-151 (RGLHVITWGC…LPEMVARAAR (121 aa)). Positions 40, 76, 114, 192, 196, and 199 each coordinate [4Fe-4S] cluster. In terms of domain architecture, Radical SAM core spans 178–410 (SPGGITSFLT…QALLRTQQDA (233 aa)). The TRAM domain maps to 413-475 (DGTVGHVVPV…TNSLSGTLVQ (63 aa)).

The protein belongs to the methylthiotransferase family. MiaB subfamily. In terms of assembly, monomer. [4Fe-4S] cluster is required as a cofactor.

The protein resides in the cytoplasm. It catalyses the reaction N(6)-dimethylallyladenosine(37) in tRNA + (sulfur carrier)-SH + AH2 + 2 S-adenosyl-L-methionine = 2-methylsulfanyl-N(6)-dimethylallyladenosine(37) in tRNA + (sulfur carrier)-H + 5'-deoxyadenosine + L-methionine + A + S-adenosyl-L-homocysteine + 2 H(+). Catalyzes the methylthiolation of N6-(dimethylallyl)adenosine (i(6)A), leading to the formation of 2-methylthio-N6-(dimethylallyl)adenosine (ms(2)i(6)A) at position 37 in tRNAs that read codons beginning with uridine. The protein is tRNA-2-methylthio-N(6)-dimethylallyladenosine synthase of Gluconacetobacter diazotrophicus (strain ATCC 49037 / DSM 5601 / CCUG 37298 / CIP 103539 / LMG 7603 / PAl5).